Here is a 197-residue protein sequence, read N- to C-terminus: Phosphoheptose isomerase (197 aa).

One can recognise an SIS domain in the interval 36 to 197 (MVNALLNEGK…IDSQLFGSEE (162 aa)). Position 51–53 (51–53 (NGG)) interacts with substrate. Residues H60 and E64 each coordinate Zn(2+). Substrate contacts are provided by residues E64, 93-94 (ND), 119-121 (STS), S124, and Q174. Zn(2+) is bound by residues Q174 and H182.

This sequence belongs to the SIS family. GmhA subfamily. As to quaternary structure, homotetramer. Zn(2+) is required as a cofactor.

It is found in the cytoplasm. The enzyme catalyses 2 D-sedoheptulose 7-phosphate = D-glycero-alpha-D-manno-heptose 7-phosphate + D-glycero-beta-D-manno-heptose 7-phosphate. It functions in the pathway carbohydrate biosynthesis; D-glycero-D-manno-heptose 7-phosphate biosynthesis; D-glycero-alpha-D-manno-heptose 7-phosphate and D-glycero-beta-D-manno-heptose 7-phosphate from sedoheptulose 7-phosphate: step 1/1. Catalyzes the isomerization of sedoheptulose 7-phosphate in D-glycero-D-manno-heptose 7-phosphate. The sequence is that of Phosphoheptose isomerase from Pseudomonas syringae pv. syringae (strain B728a).